The chain runs to 263 residues: Proteasome subunit alpha type-1 (263 aa).

N-acetylmethionine is present on Met-1. Phosphoserine; alternate is present on Ser-110. Ser-110 carries O-linked (GlcNAc) serine; alternate glycosylation. Lys-115 is covalently cross-linked (Glycyl lysine isopeptide (Lys-Gly) (interchain with G-Cter in ubiquitin)). Position 177 is a phosphoserine (Ser-177). Residue Lys-208 forms a Glycyl lysine isopeptide (Lys-Gly) (interchain with G-Cter in ubiquitin) linkage. Residues 232-263 (FLEGLEERPQRKAQPTQPADEPAEKADEPMEH) form a disordered region. Over residues 253 to 263 (PAEKADEPMEH) the composition is skewed to basic and acidic residues.

It belongs to the peptidase T1A family. In terms of assembly, the 26S proteasome consists of a 20S proteasome core and two 19S regulatory subunits. The 20S proteasome core is a barrel-shaped complex made of 28 subunits that are arranged in four stacked rings. The two outer rings are each formed by seven alpha subunits, and the two inner rings are formed by seven beta subunits. The proteolytic activity is exerted by three beta-subunits PSMB5, PSMB6 and PSMB7. Interacts with NOTCH3. Interacts with ZFAND1.

It localises to the cytoplasm. The protein localises to the nucleus. Functionally, component of the 20S core proteasome complex involved in the proteolytic degradation of most intracellular proteins. This complex plays numerous essential roles within the cell by associating with different regulatory particles. Associated with two 19S regulatory particles, forms the 26S proteasome and thus participates in the ATP-dependent degradation of ubiquitinated proteins. The 26S proteasome plays a key role in the maintenance of protein homeostasis by removing misfolded or damaged proteins that could impair cellular functions, and by removing proteins whose functions are no longer required. Associated with the PA200 or PA28, the 20S proteasome mediates ubiquitin-independent protein degradation. This type of proteolysis is required in several pathways including spermatogenesis (20S-PA200 complex) or generation of a subset of MHC class I-presented antigenic peptides (20S-PA28 complex). This is Proteasome subunit alpha type-1 (PSMA1) from Bos taurus (Bovine).